The sequence spans 281 residues: AB hydrolase superfamily protein YclE (281 aa).

The AB hydrolase-1 domain maps to 30–268 (SAVYYPRLFS…SGHQPMLEEP (239 aa)). Serine 95 (nucleophile) is an active-site residue. The active site involves aspartate 232. The Proton donor role is filled by histidine 261.

This sequence belongs to the AB hydrolase superfamily.

In Bacillus subtilis (strain 168), this protein is AB hydrolase superfamily protein YclE (yclE).